We begin with the raw amino-acid sequence, 552 residues long: Putative transport protein NT01EI_3867 (552 aa).

The next 5 helical transmembrane spans lie at 4–24 (IALT…IGNW), 26–46 (IYGV…VGHF), 65–85 (FGLI…FFSS), 90–112 (GLRL…AAIH), and 158–178 (MGYA…IWLI). 2 consecutive RCK C-terminal domains span residues 191 to 276 (RDFD…VIGE) and 279 to 361 (DTSL…IVGN). A run of 6 helical transmembrane segments spans residues 371 to 391 (MLPV…PLFI), 403 to 425 (AGGP…LYWF), 439 to 459 (IVLF…DTLL), 464 to 484 (VTWI…AALL), 493 to 513 (YLTL…LAFA), and 530 to 550 (VYPL…LLFW).

Belongs to the AAE transporter (TC 2.A.81) family. YidE subfamily.

It is found in the cell membrane. The polypeptide is Putative transport protein NT01EI_3867 (Edwardsiella ictaluri (strain 93-146)).